The chain runs to 353 residues: Mannonate dehydratase (353 aa).

The protein belongs to the mannonate dehydratase family. Fe(2+) serves as cofactor. It depends on Mn(2+) as a cofactor.

The catalysed reaction is D-mannonate = 2-dehydro-3-deoxy-D-gluconate + H2O. The protein operates within carbohydrate metabolism; pentose and glucuronate interconversion. In terms of biological role, catalyzes the dehydration of D-mannonate. The chain is Mannonate dehydratase from Burkholderia cenocepacia (strain ATCC BAA-245 / DSM 16553 / LMG 16656 / NCTC 13227 / J2315 / CF5610) (Burkholderia cepacia (strain J2315)).